A 529-amino-acid polypeptide reads, in one-letter code: Cytochrome P450 monooxygenase fsoB (529 aa).

A helical transmembrane segment spans residues 4 to 24; sequence WLLSLLIAGVVFAIFQLRTVG. Heme is bound at residue Cys-436.

Belongs to the cytochrome P450 family. The cofactor is heme.

It localises to the membrane. Functionally, cytochrome P450 monooxygenase; part of the gene cluster that mediates the biosynthesis of the enfumafungin-type antibiotic fuscoatroside. Four enzymes are sufficient to produce fuscoatroside: the terpene cyclase-glycosyl transferase fusion protein fsoAthe cytochrome P450 monoxygenases fsoD and fsoE, and the acetyltransferase fsoF; the cytochrome P450 monooxygenase fsoB and the glucose oxidase-like protein fsoC do not seem to play a role in biosynthesis of fuscoatroside. This is Cytochrome P450 monooxygenase fsoB from Humicola fuscoatra.